The following is a 608-amino-acid chain: Glutamine--fructose-6-phosphate aminotransferase [isomerizing] (608 aa).

The Nucleophile; for GATase activity role is filled by cysteine 2. Residues 2–218 form the Glutamine amidotransferase type-2 domain; sequence CGICGIVGHQ…DGDWCELTPD (217 aa). 2 consecutive SIS domains span residues 284-423 and 456-598; these read MPFD…ARGT and MAAV…VDQP. Residue lysine 603 is the For Fru-6P isomerization activity of the active site.

As to quaternary structure, homodimer.

It localises to the cytoplasm. It carries out the reaction D-fructose 6-phosphate + L-glutamine = D-glucosamine 6-phosphate + L-glutamate. Functionally, catalyzes the first step in hexosamine metabolism, converting fructose-6P into glucosamine-6P using glutamine as a nitrogen source. The chain is Glutamine--fructose-6-phosphate aminotransferase [isomerizing] from Gluconobacter oxydans (strain 621H) (Gluconobacter suboxydans).